Here is a 443-residue protein sequence, read N- to C-terminus: Thymidine phosphorylase (443 aa).

It belongs to the thymidine/pyrimidine-nucleoside phosphorylase family. As to quaternary structure, homodimer.

It carries out the reaction thymidine + phosphate = 2-deoxy-alpha-D-ribose 1-phosphate + thymine. It participates in pyrimidine metabolism; dTMP biosynthesis via salvage pathway; dTMP from thymine: step 1/2. Functionally, the enzymes which catalyze the reversible phosphorolysis of pyrimidine nucleosides are involved in the degradation of these compounds and in their utilization as carbon and energy sources, or in the rescue of pyrimidine bases for nucleotide synthesis. The polypeptide is Thymidine phosphorylase (Shewanella baltica (strain OS195)).